Consider the following 77-residue polypeptide: Acyl carrier protein (77 aa).

Residues 2–77 form the Carrier domain; sequence SSIDKRIKEI…DAIDYITDHT (76 aa). An O-(pantetheine 4'-phosphoryl)serine modification is found at Ser-37.

It belongs to the acyl carrier protein (ACP) family. 4'-phosphopantetheine is transferred from CoA to a specific serine of apo-ACP by AcpS. This modification is essential for activity because fatty acids are bound in thioester linkage to the sulfhydryl of the prosthetic group.

It is found in the cytoplasm. It functions in the pathway lipid metabolism; fatty acid biosynthesis. In terms of biological role, carrier of the growing fatty acid chain in fatty acid biosynthesis. The sequence is that of Acyl carrier protein from Geotalea uraniireducens (strain Rf4) (Geobacter uraniireducens).